Reading from the N-terminus, the 407-residue chain is MMEKHFVGSEIGQLRSVMLHRPNLSLKRLTPSNCQELLFDDVLSVERAGEEHDIFANTLRQQGVEVLLLTDLLTQTLDVPDAKTWLLDTQISDYRLGPTFAADIRAWLADMSHRELARHLSGGLTYGEIPASIKNMVVDTHDINDFIMKPLPNHLFTRDTSCWIYNGVSINPMAKPARQRETNNLRAIYRWHPQFADGDFIKYFGDENINYDHATLEGGDVLVIGRGAVLIGMSERTTPQGIEFLAQALFKHRQAERVIAVELPKHRSCMHLDTVMTHIDIDAFSVYPEVVRPDVQCWTLTPDGHGGLKRTQENTLVHALEKALGIDQVRLITTGGDAFEAEREQWNDANNVLTLRPGVVVGYERNIWTNEKYDKAGITVLPIPGDELGRGRGGARCMSCPLERDGI.

C397 functions as the Amidino-cysteine intermediate in the catalytic mechanism.

It belongs to the arginine deiminase family.

Its subcellular location is the cytoplasm. The catalysed reaction is L-arginine + H2O = L-citrulline + NH4(+). The protein operates within amino-acid degradation; L-arginine degradation via ADI pathway; carbamoyl phosphate from L-arginine: step 1/2. The polypeptide is Arginine deiminase (Salmonella arizonae (strain ATCC BAA-731 / CDC346-86 / RSK2980)).